Here is a 235-residue protein sequence, read N- to C-terminus: Geranylgeranylglyceryl phosphate synthase (235 aa).

A sn-glycerol 1-phosphate-binding site is contributed by Lys-13. Asp-15 and Thr-42 together coordinate Mg(2+). Sn-glycerol 1-phosphate-binding positions include 162–167 (YVEYSG), Gly-192, and 212–213 (GD).

It belongs to the GGGP/HepGP synthase family. Group I subfamily. Mg(2+) serves as cofactor.

The protein localises to the cytoplasm. The enzyme catalyses sn-glycerol 1-phosphate + (2E,6E,10E)-geranylgeranyl diphosphate = sn-3-O-(geranylgeranyl)glycerol 1-phosphate + diphosphate. It functions in the pathway membrane lipid metabolism; glycerophospholipid metabolism. Prenyltransferase that catalyzes the transfer of the geranylgeranyl moiety of geranylgeranyl diphosphate (GGPP) to the C3 hydroxyl of sn-glycerol-1-phosphate (G1P). This reaction is the first ether-bond-formation step in the biosynthesis of archaeal membrane lipids. The protein is Geranylgeranylglyceryl phosphate synthase of Natronomonas pharaonis (strain ATCC 35678 / DSM 2160 / CIP 103997 / JCM 8858 / NBRC 14720 / NCIMB 2260 / Gabara) (Halobacterium pharaonis).